Reading from the N-terminus, the 332-residue chain is MTKPGNKAERHIPVLLQPVLAGLMPLIGAKVIDGTFGAGGYTRALLNAGAQVIALDRDPHAVREGQSLVDEFFPRLRLMQMEFSQLDRVVEEKVDAVILDIGVSSMQFDEAERGFSFQKDGPLDMRMAQTGFTAGDVVNRLKKDDLARIFKILGEERYAGRIARMIEKRRCVQPFLRTGDLAHAIEALVGRKPGDRIHPATRVFQALRIYVNDEIGELARGLFAAESVLKPGGRLGVVSFHSLEDRMVKRFFSARSGGCRRSRYLPEIEAVPATFFSLFKGAITASKEELQQNPRSRSARLRIGIRTEAECLAKDIKLFDFAEIASFEGSKK.

S-adenosyl-L-methionine-binding positions include 39–41 (GGY), Asp56, Phe83, Asp100, and Gln107.

It belongs to the methyltransferase superfamily. RsmH family.

Its subcellular location is the cytoplasm. The enzyme catalyses cytidine(1402) in 16S rRNA + S-adenosyl-L-methionine = N(4)-methylcytidine(1402) in 16S rRNA + S-adenosyl-L-homocysteine + H(+). In terms of biological role, specifically methylates the N4 position of cytidine in position 1402 (C1402) of 16S rRNA. The chain is Ribosomal RNA small subunit methyltransferase H from Bartonella quintana (strain Toulouse) (Rochalimaea quintana).